Here is a 394-residue protein sequence, read N- to C-terminus: Actin-related protein 2-B (394 aa).

Residues 160-162 (GDG), 214-218 (RMMKE), and 305-310 (GGSTMY) each bind ATP.

It belongs to the actin family. ARP2 subfamily. As to quaternary structure, component of the Arp2/3 complex composed of actr2/arp2, actr3/arp3, arpc1b, arpc2, arpc3, arpc4 and arpc5.

It localises to the cytoplasm. Its subcellular location is the cytoskeleton. The protein localises to the cell projection. It is found in the nucleus. Its function is as follows. ATP-binding component of the Arp2/3 complex, a multiprotein complex that mediates actin polymerization upon stimulation by nucleation-promoting factor (NPF). The Arp2/3 complex mediates the formation of branched actin networks in the cytoplasm, providing the force for cell motility. Seems to contact the pointed end of the daughter actin filament. In addition to its role in the cytoplasmic cytoskeleton, the Arp2/3 complex also promotes actin polymerization in the nucleus, thereby regulating gene transcription and repair of damaged DNA. The Arp2/3 complex promotes homologous recombination (HR) repair in response to DNA damage by promoting nuclear actin polymerization, leading to drive motility of double-strand breaks (DSBs). This Danio rerio (Zebrafish) protein is Actin-related protein 2-B (actr2b).